We begin with the raw amino-acid sequence, 354 residues long: Uroporphyrinogen decarboxylase (354 aa).

Substrate is bound by residues 27-31 (RQAGR), D77, Y154, T209, and H327.

Belongs to the uroporphyrinogen decarboxylase family. Homodimer.

The protein localises to the cytoplasm. The enzyme catalyses uroporphyrinogen III + 4 H(+) = coproporphyrinogen III + 4 CO2. Its pathway is porphyrin-containing compound metabolism; protoporphyrin-IX biosynthesis; coproporphyrinogen-III from 5-aminolevulinate: step 4/4. Its function is as follows. Catalyzes the decarboxylation of four acetate groups of uroporphyrinogen-III to yield coproporphyrinogen-III. This Hydrogenovibrio crunogenus (strain DSM 25203 / XCL-2) (Thiomicrospira crunogena) protein is Uroporphyrinogen decarboxylase.